Reading from the N-terminus, the 158-residue chain is Large ribosomal subunit protein uL13 (158 aa).

Belongs to the universal ribosomal protein uL13 family. As to quaternary structure, part of the 50S ribosomal subunit.

Its function is as follows. This protein is one of the early assembly proteins of the 50S ribosomal subunit, although it is not seen to bind rRNA by itself. It is important during the early stages of 50S assembly. This chain is Large ribosomal subunit protein uL13, found in Rickettsia canadensis (strain McKiel).